Consider the following 492-residue polypeptide: Beta-Ala-His dipeptidase (492 aa).

His107 contacts Zn(2+). Asp109 is an active-site residue. Residue Asp140 coordinates Zn(2+). Glu174 (proton acceptor) is an active-site residue. Glu175 is a Zn(2+) binding site. Ser194 is modified (phosphoserine). 2 residues coordinate Zn(2+): Asp203 and His453.

The protein belongs to the peptidase M20A family. Homodimer. Zn(2+) serves as cofactor. As to expression, detected exclusively in kidney.

The protein resides in the secreted. The enzyme catalyses Preferential hydrolysis of the beta-Ala-|-His dipeptide (carnosine), and also anserine, Xaa-|-His dipeptides and other dipeptides including homocarnosine.. It catalyses the reaction carnosine + H2O = beta-alanine + L-histidine. It carries out the reaction anserine + H2O = N(pros)-methyl-L-histidine + beta-alanine. The catalysed reaction is L-alanyl-L-histidine + H2O = L-histidine + L-alanine. The enzyme catalyses glycyl-L-histidine + H2O = L-histidine + glycine. It catalyses the reaction L-homocarnosine + H2O = 4-aminobutanoate + L-histidine. Its function is as follows. Catalyzes the peptide bond hydrolysis in Xaa-His dipeptides, displaying the highest activity toward carnosine (beta-alanyl-L-histidine) and anserine (beta-alanyl-3-methyl-histidine). This is Beta-Ala-His dipeptidase (Cndp1) from Rattus norvegicus (Rat).